The primary structure comprises 634 residues: MSDKQTDKDEKTGLSRRGFLGASALTRSAVAASGLVGGVMTRDSWAAAAKEAQQKIHVAPGELDEYYGFWSGGHQGEVRVLGVPSMRELMRIPVFNVDSATGWGLTNESRHILGDTAKFLNGDCHHPHISMTDGKYDGKYLFINDKANSRVARIRLDIMKCDKITTIPNVQAIHGLRLQKVPHTKYVFCNAEFIIPHPNDGKVFDLEDENSFTMYNAVDAETMEVAFQVIVDGNLDNTDADYTGRFTAATCYNSEKAFDLGGMMRNERDWVVVFDISAVEKEIKAGRFITLGDSKVPVVDGRKKDGKDSVVTRYIPVPKNPHGLNTSTDGKYFIANGKLSPTCSMIAIDLLPDLFAGKLKDPRDVVVGEPELGLGPLHTTFDGRGNAYTTLFIDSQVVKWNMEEARRAYKGEKVNYIKQKLDVHYQPGHLHASLCETSEADGKWLVALSKFSKDRFLPTGPLHPENDQLIDISGDVMKLVHDGPTFAEPHDCIMARRDQIKTRKIWDRNDPFFAPTVAMAKKDGINLEEDNKVIRDGNKVRVYMTSMAPAYGLTEFKVKQGNEVTVVITNMDQIEDVSHGFVMVNHGVSMEISPQQTSSITFIADKPGLHWYYCSWFCHALHMEMVGRMMVEPA.

The tat-type signal signal peptide spans 1–49; that stretch reads MSDKQTDKDEKTGLSRRGFLGASALTRSAVAASGLVGGVMTRDSWAAAA. Cu cation-binding residues include His-125, His-126, and His-174. Residues Tyr-252, Glu-255, Met-263, Asp-269, and Asn-320 each coordinate Ca(2+). Cu cation is bound by residues His-322, His-378, and His-429. Residues Lys-450 and Glu-465 each coordinate Ca(2+). Cu cation-binding residues include His-490, His-579, Cys-614, Trp-616, Cys-618, His-622, and Met-625. The COX2-like stretch occupies residues 538–634; sequence NKVRVYMTSM…MVGRMMVEPA (97 aa).

This sequence belongs to the NosZ family. The protein in the C-terminal section; belongs to the cytochrome c oxidase subunit 2 family. As to quaternary structure, homodimer. Ca(2+) serves as cofactor. Requires Cu cation as cofactor. In terms of processing, predicted to be exported by the Tat system. The position of the signal peptide cleavage has not been experimentally proven.

The protein localises to the periplasm. It carries out the reaction N2 + 2 Fe(III)-[cytochrome c] + H2O = nitrous oxide + 2 Fe(II)-[cytochrome c] + 2 H(+). Its pathway is nitrogen metabolism; nitrate reduction (denitrification); dinitrogen from nitrate: step 4/4. In terms of biological role, nitrous-oxide reductase is part of a bacterial respiratory system which is activated under anaerobic conditions in the presence of nitrate or nitrous oxide. The sequence is that of Nitrous-oxide reductase (nosZ) from Pseudomonas aeruginosa.